Here is a 964-residue protein sequence, read N- to C-terminus: Siderophore exporter MmpL5 (964 aa).

The next 12 membrane-spanning stretches (helical) occupy residues 31 to 51, 203 to 223, 230 to 250, 255 to 275, 302 to 322, 340 to 360, 389 to 409, 773 to 793, 803 to 823, 826 to 846, 880 to 900, and 923 to 943; these read FAVP…VTVP, SLQV…LLVY, AIML…VAFL, IIGL…AAAT, MFGG…GATF, AIGM…IIAV, WPGP…LTLP, TYDL…IMLI, VIVG…VLIW, ILGI…LLAV, VVTA…VSEL, and SFMT…PQVV.

It belongs to the resistance-nodulation-cell division (RND) (TC 2.A.6) family. MmpL subfamily. As to quaternary structure, interacts with MmpS5.

Its subcellular location is the cell inner membrane. In terms of biological role, part of an export system, which is required for biosynthesis and secretion of siderophores. This Mycobacterium tuberculosis (strain CDC 1551 / Oshkosh) protein is Siderophore exporter MmpL5 (mmpL5).